Consider the following 502-residue polypeptide: Probable RNA exonuclease C9B6.11c (502 aa).

A disordered region spans residues 338-379 (SELEEKNASTKTENDSNEDDKEECQSSSTSSVPESTASTPKK). Residues 341–351 (EEKNASTKTEN) show a composition bias toward basic and acidic residues. Positions 363–376 (SSSTSSVPESTAST) are enriched in low complexity.

It belongs to the CCR4/nocturin family.

It localises to the cytoplasm. The protein localises to the nucleus. This chain is Probable RNA exonuclease C9B6.11c, found in Schizosaccharomyces pombe (strain 972 / ATCC 24843) (Fission yeast).